Here is a 589-residue protein sequence, read N- to C-terminus: uncharacterized protein (589 aa).

This is an uncharacterized protein from Bacillus anthracis.